Here is a 352-residue protein sequence, read N- to C-terminus: Holliday junction branch migration complex subunit RuvB (352 aa).

A large ATPase domain (RuvB-L) region spans residues 4–191 (TDKFSAPDRV…FGIVARLEFY (188 aa)). ATP contacts are provided by residues L30, R31, G72, K75, T76, T77, 138-140 (EDY), R181, Y191, and R228. Position 76 (T76) interacts with Mg(2+). The tract at residues 192–262 (TAEELARIVT…IADAALAMLD (71 aa)) is small ATPAse domain (RuvB-S). Residues 265 to 352 (RVGFDLMDRK…GDSGDLIDGE (88 aa)) form a head domain (RuvB-H) region. DNA-binding residues include R301, R320, and R325.

Belongs to the RuvB family. Homohexamer. Forms an RuvA(8)-RuvB(12)-Holliday junction (HJ) complex. HJ DNA is sandwiched between 2 RuvA tetramers; dsDNA enters through RuvA and exits via RuvB. An RuvB hexamer assembles on each DNA strand where it exits the tetramer. Each RuvB hexamer is contacted by two RuvA subunits (via domain III) on 2 adjacent RuvB subunits; this complex drives branch migration. In the full resolvosome a probable DNA-RuvA(4)-RuvB(12)-RuvC(2) complex forms which resolves the HJ.

It is found in the cytoplasm. The catalysed reaction is ATP + H2O = ADP + phosphate + H(+). Functionally, the RuvA-RuvB-RuvC complex processes Holliday junction (HJ) DNA during genetic recombination and DNA repair, while the RuvA-RuvB complex plays an important role in the rescue of blocked DNA replication forks via replication fork reversal (RFR). RuvA specifically binds to HJ cruciform DNA, conferring on it an open structure. The RuvB hexamer acts as an ATP-dependent pump, pulling dsDNA into and through the RuvAB complex. RuvB forms 2 homohexamers on either side of HJ DNA bound by 1 or 2 RuvA tetramers; 4 subunits per hexamer contact DNA at a time. Coordinated motions by a converter formed by DNA-disengaged RuvB subunits stimulates ATP hydrolysis and nucleotide exchange. Immobilization of the converter enables RuvB to convert the ATP-contained energy into a lever motion, pulling 2 nucleotides of DNA out of the RuvA tetramer per ATP hydrolyzed, thus driving DNA branch migration. The RuvB motors rotate together with the DNA substrate, which together with the progressing nucleotide cycle form the mechanistic basis for DNA recombination by continuous HJ branch migration. Branch migration allows RuvC to scan DNA until it finds its consensus sequence, where it cleaves and resolves cruciform DNA. The polypeptide is Holliday junction branch migration complex subunit RuvB (Cupriavidus pinatubonensis (strain JMP 134 / LMG 1197) (Cupriavidus necator (strain JMP 134))).